The chain runs to 124 residues: Chorion class high-cysteine HCA protein 12 (124 aa).

An N-terminal signal peptide occupies residues 1 to 21; that stretch reads MFTFALLLLCVQGCLIQNVYG. Positions 22 to 35 are left arm; the sequence is QCCGCGCGGGCGCG. Residues 36 to 83 form a central domain region; the sequence is CYGGEGDGNVNVCGELPVCGETLVCGRVPICGGVCFKGPACASGCVSI. Positions 84–124 are right arm (Gly- and Cys-rich tandem repeats); it reads CGRCCGCGCGGCGGCGCGCGGCGCGCGGCGGCGCGRRCCCC.

Belongs to the chorion protein family.

This protein is one of many from the eggshell of the silk moth. In Bombyx mori (Silk moth), this protein is Chorion class high-cysteine HCA protein 12.